A 363-amino-acid chain; its full sequence is 3-isopropylmalate dehydrogenase (363 aa).

78-91 (GPKWEHLPPDQQPE) contacts NAD(+). Substrate contacts are provided by Arg-99, Arg-109, Arg-138, and Asp-227. The Mg(2+) site is built by Asp-227, Asp-251, and Asp-255. NAD(+) is bound at residue 285–297 (GSAPDITGKNIAN).

This sequence belongs to the isocitrate and isopropylmalate dehydrogenases family. LeuB type 1 subfamily. In terms of assembly, homodimer. The cofactor is Mg(2+). It depends on Mn(2+) as a cofactor.

It is found in the cytoplasm. It carries out the reaction (2R,3S)-3-isopropylmalate + NAD(+) = 4-methyl-2-oxopentanoate + CO2 + NADH. It participates in amino-acid biosynthesis; L-leucine biosynthesis; L-leucine from 3-methyl-2-oxobutanoate: step 3/4. Its function is as follows. Catalyzes the oxidation of 3-carboxy-2-hydroxy-4-methylpentanoate (3-isopropylmalate) to 3-carboxy-4-methyl-2-oxopentanoate. The product decarboxylates to 4-methyl-2 oxopentanoate. This Shigella boydii serotype 4 (strain Sb227) protein is 3-isopropylmalate dehydrogenase.